A 206-amino-acid polypeptide reads, in one-letter code: Ribosomal RNA small subunit methyltransferase G (206 aa).

Residues Gly73, Leu78, 124–125, and Arg139 each bind S-adenosyl-L-methionine; that span reads VE.

This sequence belongs to the methyltransferase superfamily. RNA methyltransferase RsmG family.

Its subcellular location is the cytoplasm. It carries out the reaction guanosine(527) in 16S rRNA + S-adenosyl-L-methionine = N(7)-methylguanosine(527) in 16S rRNA + S-adenosyl-L-homocysteine. In terms of biological role, specifically methylates the N7 position of guanine in position 527 of 16S rRNA. The polypeptide is Ribosomal RNA small subunit methyltransferase G (Edwardsiella ictaluri (strain 93-146)).